A 494-amino-acid polypeptide reads, in one-letter code: UDP-glucose 6-dehydrogenase (494 aa).

NAD(+) contacts are provided by residues 11 to 16 (GAGYVG), aspartate 36, arginine 41, and 89 to 93 (VNTPT). The tract at residues 88 to 110 (SVNTPTKTYGMGKGRAADLKYIE) is disordered. N6-acetyllysine is present on lysine 107. Residues 129 to 135 (KSTVPVR) are allosteric switch region. 130 to 132 (STV) contributes to the NAD(+) binding site. The active-site Proton donor/acceptor is the glutamate 161. Residues 161–165 (EFLAE), 220–224 (KLAAN), arginine 260, and 267–273 (KASVGFG) each bind substrate. Glutamate 165 is a binding site for NAD(+). Lysine 220 functions as the Proton donor/acceptor in the catalytic mechanism. The active-site Nucleophile is the cysteine 276. NAD(+) is bound at residue 276-279 (CFQK). The interval 321–325 (SLFNT) is important for formation of active hexamer structure. 338–339 (FK) is a substrate binding site. Position 346 (arginine 346) interacts with NAD(+). A substrate-binding site is contributed by arginine 442. The tract at residues 466 to 494 (VSSKRIPYAPSGEIPKFSLQDPPNKKPKV) is disordered. Serine 476 bears the Phosphoserine mark.

It belongs to the UDP-glucose/GDP-mannose dehydrogenase family. As to quaternary structure, homohexamer.

The enzyme catalyses UDP-alpha-D-glucose + 2 NAD(+) + H2O = UDP-alpha-D-glucuronate + 2 NADH + 3 H(+). It functions in the pathway nucleotide-sugar biosynthesis; UDP-alpha-D-glucuronate biosynthesis; UDP-alpha-D-glucuronate from UDP-alpha-D-glucose: step 1/1. UDP-alpha-D-xylose (UDX) acts as a feedback inhibitor. It binds at the same site as the substrate, but functions as allosteric inhibitor by triggering a conformation change that disrupts the active hexameric ring structure and gives rise to an inactive, horseshoe-shaped hexamer. In terms of biological role, catalyzes the formation of UDP-alpha-D-glucuronate, a constituent of complex glycosaminoglycans. Required for the biosynthesis of chondroitin sulfate and heparan sulfate. Required for embryonic development via its role in the biosynthesis of glycosaminoglycans. Required for proper brain and neuronal development. The sequence is that of UDP-glucose 6-dehydrogenase (UGDH) from Pongo abelii (Sumatran orangutan).